A 919-amino-acid chain; its full sequence is 2-oxoadipate dehydrogenase complex component E1 (919 aa).

An N6-succinyllysine mark is found at Lys183 and Lys188. The segment at 299–320 (GKTRGRQQSRQDGDYSPDNSAQ) is disordered. An N6-succinyllysine mark is found at Lys800 and Lys818.

The protein belongs to the alpha-ketoglutarate dehydrogenase family. The 2-oxoadipate dehydrogenase complex is composed of OADH (2-oxoadipate dehydrogenase; E1a), DLST (dihydrolipoamide succinyltransferase; E2) and DLD (dihydrolipoamide dehydrogenase; E3). E1a functional unit is a dimer. Interacts with DLST. It depends on thiamine diphosphate as a cofactor.

The protein resides in the mitochondrion. It carries out the reaction N(6)-[(R)-lipoyl]-L-lysyl-[protein] + 2-oxoadipate + H(+) = N(6)-[(R)-S(8)-glutaryldihydrolipoyl]-L-lysyl-[protein] + CO2. It participates in amino-acid degradation. 2-oxoadipate dehydrogenase (E1a) component of the 2-oxoadipate dehydrogenase complex (OADHC). Participates in the first step, rate limiting for the overall conversion of 2-oxoadipate (alpha-ketoadipate) to glutaryl-CoA and CO(2) catalyzed by the whole OADHC. Catalyzes the irreversible decarboxylation of 2-oxoadipate via the thiamine diphosphate (ThDP) cofactor and subsequent transfer of the decarboxylated acyl intermediate on an oxidized dihydrolipoyl group that is covalently amidated to the E2 enzyme (dihydrolipoyllysine-residue succinyltransferase or DLST). Can catalyze the decarboxylation of 2-oxoglutarate in vitro, but at a much lower rate than 2-oxoadipate. Responsible for the last step of L-lysine, L-hydroxylysine and L-tryptophan catabolism with the common product being 2-oxoadipate. This Homo sapiens (Human) protein is 2-oxoadipate dehydrogenase complex component E1 (DHTKD1).